The primary structure comprises 220 residues: ATP-dependent dethiobiotin synthetase BioD (220 aa).

G11–F16 contributes to the ATP binding site. T15 is a Mg(2+) binding site. K36 is a catalytic residue. T40 provides a ligand contact to substrate. ATP contacts are provided by residues D48 and E107 to G110. Mg(2+) is bound by residues D48 and E107.

Belongs to the dethiobiotin synthetase family. Homodimer. Mg(2+) serves as cofactor.

Its subcellular location is the cytoplasm. It catalyses the reaction (7R,8S)-7,8-diammoniononanoate + CO2 + ATP = (4R,5S)-dethiobiotin + ADP + phosphate + 3 H(+). It participates in cofactor biosynthesis; biotin biosynthesis; biotin from 7,8-diaminononanoate: step 1/2. Catalyzes a mechanistically unusual reaction, the ATP-dependent insertion of CO2 between the N7 and N8 nitrogen atoms of 7,8-diaminopelargonic acid (DAPA, also called 7,8-diammoniononanoate) to form a ureido ring. This Aquifex aeolicus (strain VF5) protein is ATP-dependent dethiobiotin synthetase BioD.